A 319-amino-acid polypeptide reads, in one-letter code: Acetyl-coenzyme A carboxylase carboxyl transferase subunit alpha (319 aa).

The region spanning 35-296 (NIDEEVHRLR…KAQLLADLAD (262 aa)) is the CoA carboxyltransferase C-terminal domain.

Belongs to the AccA family. Acetyl-CoA carboxylase is a heterohexamer composed of biotin carboxyl carrier protein (AccB), biotin carboxylase (AccC) and two subunits each of ACCase subunit alpha (AccA) and ACCase subunit beta (AccD).

The protein resides in the cytoplasm. The catalysed reaction is N(6)-carboxybiotinyl-L-lysyl-[protein] + acetyl-CoA = N(6)-biotinyl-L-lysyl-[protein] + malonyl-CoA. It participates in lipid metabolism; malonyl-CoA biosynthesis; malonyl-CoA from acetyl-CoA: step 1/1. Its function is as follows. Component of the acetyl coenzyme A carboxylase (ACC) complex. First, biotin carboxylase catalyzes the carboxylation of biotin on its carrier protein (BCCP) and then the CO(2) group is transferred by the carboxyltransferase to acetyl-CoA to form malonyl-CoA. The protein is Acetyl-coenzyme A carboxylase carboxyl transferase subunit alpha of Escherichia coli O127:H6 (strain E2348/69 / EPEC).